We begin with the raw amino-acid sequence, 926 residues long: Storkhead-box protein 2 (926 aa).

Disordered stretches follow at residues 1–32 (MKKT…RSEK), 338–394 (EEEK…IPGG), 452–529 (EMPF…SYVD), 632–693 (GVKK…SLDK), 724–803 (LKSH…GTMQ), and 825–926 (LAPK…VTSV). The span at 18–32 (FSDRASDRMRSRSEK) shows a compositional bias: basic and acidic residues. Over residues 353–378 (HSGRSKKSRTHRKSHGKSRSHSKTRV) the composition is skewed to basic residues. A compositionally biased stretch (basic and acidic residues) spans 379-394 (SKGDPSDGSHLDIPGG). Residues 463 to 472 (SHSKVHRSHS) are compositionally biased toward basic residues. Residues 473–495 (HTQDRRSRNERSNKAKERSRSMD) show a composition bias toward basic and acidic residues. Polar residues predominate over residues 518–529 (QDDQTPSQSYVD). 2 stretches are compositionally biased toward basic and acidic residues: residues 632-658 (GVKK…EESP) and 684-693 (HGAEPSSLDK). A compositionally biased stretch (polar residues) spans 746–772 (LGTSAAQATPASQRQQESGGNQETSFD). Positions 785–799 (GANKNTEEEKNREDV) are enriched in basic and acidic residues. Composition is skewed to polar residues over residues 847–884 (MDSS…QNPA) and 914–926 (KPSN…VTSV).

The chain is Storkhead-box protein 2 (STOX2) from Macaca fascicularis (Crab-eating macaque).